The following is a 270-amino-acid chain: CASP-like protein 4A1 (270 aa).

Residues 1–110 (MEELEKTQKF…PSFSSSSSTP (110 aa)) are disordered. Residues 1–121 (MEELEKTQKF…ESKWASLIRK (121 aa)) lie on the Cytoplasmic side of the membrane. The span at 24–66 (SSPINFEMSSRSSLHSLPQTTIESPPDSPTLSSIPDSHGSSPH) shows a compositional bias: polar residues. Basic and acidic residues predominate over residues 85–97 (NGEEEKKVSESRR). The segment covering 100-110 (RPSFSSSSSTP) has biased composition (low complexity). Residues 122–142 (ALLGFRVIAFVSCLVSFSVMV) traverse the membrane as a helical segment. Topologically, residues 143–161 (SDRDKGWAHDSFYNYKEFR) are extracellular. The chain crosses the membrane as a helical span at residues 162 to 182 (FCLAANVIGFVYSGFMICDLV). At 183–198 (YLLSTSIRRSRHNLRH) the chain is on the cytoplasmic side. Residues 199 to 221 (FLEFGLDQMLAYLLASASTSASI) form a helical membrane-spanning segment. The Extracellular segment spans residues 222–246 (RVDDWQSNWGADKFPDLARASVALS). The chain crosses the membrane as a helical span at residues 247-267 (YVSFVAFAFCSLASGYALCAL). Over 268–270 (RSI) the chain is Cytoplasmic.

Belongs to the Casparian strip membrane proteins (CASP) family. In terms of assembly, homodimer and heterodimers.

It localises to the cell membrane. In Arabidopsis thaliana (Mouse-ear cress), this protein is CASP-like protein 4A1.